A 490-amino-acid polypeptide reads, in one-letter code: Dual specificity protein kinase CLK3 (490 aa).

Residues 1-138 (MHHCKRYRSP…SKRSSRSVED (138 aa)) form a disordered region. A Phosphotyrosine modification is found at Y7. Residues S9, S49, S51, S67, S76, and S78 each carry the phosphoserine modification. 2 stretches are compositionally biased toward basic and acidic residues: residues 26–56 (YSREHEGRLRYPSRREPPPRRSRSRSHDRIP) and 63–76 (EHRDSDTYRCEERS). Basic residues predominate over residues 88–116 (RSRHRRRSRERGPYRTRKHAHHCHKRRTR). Positions 117–130 (SCSSASSRSQQSSK) are enriched in low complexity. Position 135 is a phosphoserine (S135). A Protein kinase domain is found at 156–472 (YEIVGNLGEG…LAEALLHPFF (317 aa)). Residues 162 to 170 (LGEGTFGKV) and K186 each bind ATP. D283 functions as the Proton acceptor in the catalytic mechanism.

It belongs to the protein kinase superfamily. CMGC Ser/Thr protein kinase family. Lammer subfamily. In terms of processing, autophosphorylates on all three types of residues.

It is found in the nucleus. Its subcellular location is the cytoplasm. The protein resides in the cytoplasmic vesicle. The protein localises to the secretory vesicle. It localises to the acrosome. It carries out the reaction L-seryl-[protein] + ATP = O-phospho-L-seryl-[protein] + ADP + H(+). The enzyme catalyses L-threonyl-[protein] + ATP = O-phospho-L-threonyl-[protein] + ADP + H(+). It catalyses the reaction L-tyrosyl-[protein] + ATP = O-phospho-L-tyrosyl-[protein] + ADP + H(+). Its activity is regulated as follows. Leucettine L41 inhibits its kinase activity and affects the regulation of alternative splicing mediated by phosphorylation of SR proteins. Dual specificity kinase acting on both serine/threonine and tyrosine-containing substrates. Phosphorylates serine- and arginine-rich (SR) proteins of the spliceosomal complex. May be a constituent of a network of regulatory mechanisms that enable SR proteins to control RNA splicing and can cause redistribution of SR proteins from speckles to a diffuse nucleoplasmic distribution. Phosphorylates SRSF1 and SRSF3. Regulates the alternative splicing of tissue factor (F3) pre-mRNA in endothelial cells. This Rattus norvegicus (Rat) protein is Dual specificity protein kinase CLK3 (Clk3).